A 220-amino-acid polypeptide reads, in one-letter code: Eukaryotic translation initiation factor 3 subunit B (220 aa).

Residues 1–94 (MPEPIAFDES…LIIELDSAAA (94 aa)) form a sufficient for interaction with HCR1 and TIF32 region. A sufficient for interaction with PIC8 region spans residues 1–220 (MPEPIAFDES…GVQAWGGERI (220 aa)). Positions 37 to 120 (HFVICDGAPI…HRLAVNKLPD (84 aa)) constitute an RRM domain.

Belongs to the eIF-3 subunit B family. Component of the eukaryotic translation initiation factor 3 (eIF-3) complex.

Its subcellular location is the cytoplasm. In terms of biological role, RNA-binding component of the eukaryotic translation initiation factor 3 (eIF-3) complex, which is involved in protein synthesis of a specialized repertoire of mRNAs and, together with other initiation factors, stimulates binding of mRNA and methionyl-tRNAi to the 40S ribosome. The eIF-3 complex specifically targets and initiates translation of a subset of mRNAs involved in cell proliferation. This Pichia angusta (Yeast) protein is Eukaryotic translation initiation factor 3 subunit B (TIF32).